We begin with the raw amino-acid sequence, 550 residues long: Aldehyde dehydrogenase family 3 member I1, chloroplastic (550 aa).

Residues 1 to 59 (MTKLLEINHIQTLCFAKGFSPARLNVATSPFRISRRGGGGYCSNACIPYRLKFTCYATL) constitute a chloroplast transit peptide. NAD(+) is bound at residue 259–264 (GGARVA). Residue E281 is the Proton acceptor of the active site. C316 acts as the Nucleophile in catalysis.

This sequence belongs to the aldehyde dehydrogenase family. In terms of assembly, homodimer and homomultimer.

It localises to the plastid. Its subcellular location is the chloroplast. The enzyme catalyses an aldehyde + NAD(+) + H2O = a carboxylate + NADH + 2 H(+). Thiol-based regulation. Inactivation after dimerization under oxidizing conditions. Functionally, involved in oxidative stress tolerance by detoxifying reactive aldehydes derived from lipid peroxidation. Medium- to long-chain saturated aldehydes are preferred substrates, while the short-chain aldehyde propanal is a weak substrate. Can use both NAD(+) and NADP(+), but the coenzyme preference is substrate dependent. The chain is Aldehyde dehydrogenase family 3 member I1, chloroplastic (ALDH3I1) from Arabidopsis thaliana (Mouse-ear cress).